The primary structure comprises 158 residues: Small ribosomal subunit protein uS19 (158 aa).

This sequence belongs to the universal ribosomal protein uS19 family.

In terms of biological role, protein S19 forms a complex with S13 that binds strongly to the 16S ribosomal RNA. This Pyrobaculum neutrophilum (strain DSM 2338 / JCM 9278 / NBRC 100436 / V24Sta) (Thermoproteus neutrophilus) protein is Small ribosomal subunit protein uS19.